A 261-amino-acid polypeptide reads, in one-letter code: Putative ankyrin repeat protein L99 (261 aa).

ANK repeat units lie at residues 21-50, 51-80, 81-110, 112-140, 142-170, 171-203, and 231-259; these read KVNP…DVHA, HEDY…NIHS, DRDL…NVNA, QNSA…NIHA, NNFC…DINA, DNGA…IDNC, and NELK…NINS.

In Acanthamoeba polyphaga (Amoeba), this protein is Putative ankyrin repeat protein L99.